We begin with the raw amino-acid sequence, 370 residues long: uncharacterized protein (370 aa).

A divalent metal cation-binding residues include aspartate 152, histidine 154, aspartate 184, asparagine 215, histidine 306, and histidine 308.

Belongs to the metallophosphoesterase superfamily. It depends on a divalent metal cation as a cofactor.

This is an uncharacterized protein from Helicobacter pylori (strain ATCC 700392 / 26695) (Campylobacter pylori).